We begin with the raw amino-acid sequence, 353 residues long: Putative permease PerM (353 aa).

A run of 7 helical transmembrane segments spans residues isoleucine 19–leucine 39, isoleucine 72–alanine 92, leucine 156–leucine 176, valine 217–asparagine 237, leucine 240–valine 260, cysteine 281–phenylalanine 301, and leucine 310–phenylalanine 330.

This sequence belongs to the autoinducer-2 exporter (AI-2E) (TC 2.A.86) family.

The protein resides in the cell membrane. This Escherichia coli O157:H7 protein is Putative permease PerM (perM).